Reading from the N-terminus, the 219-residue chain is Mitochondrial fission factor homolog A (219 aa).

At 1–199 (MAEINRMQYE…ENKERVKHEM (199 aa)) the chain is on the cytoplasmic side. Residues 164 to 194 (DLALADAASLRRQIIKLNRRLLLLEEENKER) are a coiled coil. The chain crosses the membrane as a helical; Anchor for type IV membrane protein span at residues 200 to 217 (TMYSIIIIFGLLNSWLWL). The Extracellular portion of the chain corresponds to 218-219 (RR).

Belongs to the Tango11 family.

The protein localises to the mitochondrion outer membrane. It is found in the peroxisome. The protein resides in the cytoplasmic vesicle. Its subcellular location is the secretory vesicle. It localises to the synaptic vesicle. Plays a role in mitochondrial and peroxisomal fission. Promotes the recruitment and association of the fission mediator dynamin-related protein 1 (DNM1L) to the mitochondrial surface. In Xenopus laevis (African clawed frog), this protein is Mitochondrial fission factor homolog A (mff-a).